Reading from the N-terminus, the 225-residue chain is Thymidylate kinase (225 aa).

10 to 17 serves as a coordination point for ATP; it reads GGEGAGKT.

The protein belongs to the thymidylate kinase family.

It carries out the reaction dTMP + ATP = dTDP + ADP. Functionally, phosphorylation of dTMP to form dTDP in both de novo and salvage pathways of dTTP synthesis. The polypeptide is Thymidylate kinase (Oceanobacillus iheyensis (strain DSM 14371 / CIP 107618 / JCM 11309 / KCTC 3954 / HTE831)).